We begin with the raw amino-acid sequence, 527 residues long: Phosphoenolpyruvate carboxykinase (ATP) (527 aa).

The substrate site is built by Arg56, Tyr192, and Lys198. Residues Lys198, His217, and 233–241 (GLSGTGKTT) contribute to the ATP site. Residues Lys198 and His217 each contribute to the Mn(2+) site. Asp254 is a Mn(2+) binding site. The ATP site is built by Glu282, Arg319, and Thr444. Arg319 contacts substrate.

Belongs to the phosphoenolpyruvate carboxykinase (ATP) family. Requires Mn(2+) as cofactor.

The protein localises to the cytoplasm. It catalyses the reaction oxaloacetate + ATP = phosphoenolpyruvate + ADP + CO2. Its pathway is carbohydrate biosynthesis; gluconeogenesis. In terms of biological role, involved in the gluconeogenesis. Catalyzes the conversion of oxaloacetate (OAA) to phosphoenolpyruvate (PEP) through direct phosphoryl transfer between the nucleoside triphosphate and OAA. This Bacillus subtilis (strain 168) protein is Phosphoenolpyruvate carboxykinase (ATP).